Consider the following 340-residue polypeptide: Probable sugar phosphate/phosphate translocator At3g14410 (340 aa).

Transmembrane regions (helical) follow at residues 12–32, 44–64, 80–100, 110–130, 141–161, 163–183, 197–217, 234–254, 260–282, and 286–305; these read EFVTYAYILLYIALSSGQIFF, FPYPLGLTLLHMIFSSVLCFL, LEIYVTSVIPIGAMFAMTLWL, VAFAQMLKAIMPVAVFILGVA, LLIMSIISFGVLVASYGELNI, WIGVVYQMGGVVGEALRLIFM, ISLMYYVSPCSAICLFVPWIF, VVLTLNSLCTFALNLSVFLVI, LTIRVAGVVKDWVVVLVSALLFA, and LTIINLFGYAIAIAGVAAYN. Residues 320–340 form a disordered region; that stretch reads ETPGDAESIPLVSQGNTNTER. Residues 330–340 show a composition bias toward polar residues; the sequence is LVSQGNTNTER.

Belongs to the TPT transporter family. TPT (TC 2.A.7.9) subfamily.

The protein localises to the membrane. The chain is Probable sugar phosphate/phosphate translocator At3g14410 from Arabidopsis thaliana (Mouse-ear cress).